Consider the following 147-residue polypeptide: Ponticulin-like protein C2 (147 aa).

Residues M1–A20 form the signal peptide. N118 carries the GPI-like-anchor amidated asparagine lipid modification. N118 is a glycosylation site (N-linked (GlcNAc...) asparagine). Positions S119 to L147 are cleaved as a propeptide — removed in mature form.

The protein belongs to the ponticulin family. Post-translationally, the GPI-like-anchor contains a phosphoceramide group, rather than a phosphatidyl group.

It is found in the cell membrane. The protein is Ponticulin-like protein C2 (ponC2) of Dictyostelium discoideum (Social amoeba).